The primary structure comprises 276 residues: MLMITSFANPRVAQAFVDYMATQGVILTIQQHNQSDVWLADESQAERVRAELARFLENPADPRYLAASWQSGHTDSGLHYRRYPFFAALRERAGPVTWVMMIACVVVFIAMQILGDQEVMLWLAWPFDPTLKFEFWRYFTHALMHFSLMHILFNLLWWWYLGGAVEKRLGSGKLIVITLISALLSGYVQQKFSGPWFGGLSGVVYALMGYVWLRGERDPQSGIYLQRGLIIFALIWIVAGWFDLFGMSMANGAHIAGLAVGLAMAFVDSLNARKRK.

Helical transmembrane passes span 94-114 (GPVTWVMMIACVVVFIAMQIL), 142-162 (ALMHFSLMHILFNLLWWWYLG), 169-189 (LGSGKLIVITLISALLSGYVQ), 192-212 (FSGPWFGGLSGVVYALMGYVW), 229-249 (LIIFALIWIVAGWFDLFGMSM), and 250-270 (ANGAHIAGLAVGLAMAFVDSL). The Nucleophile role is filled by Ser-201. His-254 is a catalytic residue.

The protein belongs to the peptidase S54 family.

It localises to the cell inner membrane. The enzyme catalyses Cleaves type-1 transmembrane domains using a catalytic dyad composed of serine and histidine that are contributed by different transmembrane domains.. In terms of biological role, rhomboid-type serine protease that catalyzes intramembrane proteolysis. This Escherichia coli O7:K1 (strain IAI39 / ExPEC) protein is Rhomboid protease GlpG.